We begin with the raw amino-acid sequence, 213 residues long: Orotate phosphoribosyltransferase (213 aa).

Lysine 26 lines the 5-phospho-alpha-D-ribose 1-diphosphate pocket. 34-35 (FF) serves as a coordination point for orotate. 5-phospho-alpha-D-ribose 1-diphosphate is bound by residues 72–73 (YK), arginine 99, lysine 100, lysine 103, histidine 105, and 124–132 (DDVITAGTA). Residues threonine 128 and arginine 156 each contribute to the orotate site.

The protein belongs to the purine/pyrimidine phosphoribosyltransferase family. PyrE subfamily. In terms of assembly, homodimer. Requires Mg(2+) as cofactor.

It carries out the reaction orotidine 5'-phosphate + diphosphate = orotate + 5-phospho-alpha-D-ribose 1-diphosphate. Its pathway is pyrimidine metabolism; UMP biosynthesis via de novo pathway; UMP from orotate: step 1/2. Functionally, catalyzes the transfer of a ribosyl phosphate group from 5-phosphoribose 1-diphosphate to orotate, leading to the formation of orotidine monophosphate (OMP). The sequence is that of Orotate phosphoribosyltransferase from Haemophilus influenzae (strain ATCC 51907 / DSM 11121 / KW20 / Rd).